Reading from the N-terminus, the 899-residue chain is Auxin response factor 25 (899 aa).

The segment at 1 to 20 is disordered; it reads MKLSPPASADMPQALPENDG. The TF-B3 DNA-binding region spans 132–234; sequence FCKTLTASDT…QLLLGIRRAN (103 aa). The span at 546–564 shows a compositional bias: low complexity; sequence RQHVLQEQSSQEMQQQLPS. The interval 546–586 is disordered; it reads RQHVLQEQSSQEMQQQLPSSDHHVADVASESGSAPQAQSSL. A compositionally biased stretch (polar residues) spans 575–586; it reads ESGSAPQAQSSL. The 85-residue stretch at 766–850 folds into the PB1 domain; it reads ATFVKVYKSG…WCIKILSPQE (85 aa).

Belongs to the ARF family. As to quaternary structure, homodimers and heterodimers. Expressed in roots, culms, leaves and young panicles.

The protein resides in the nucleus. Its function is as follows. Auxin response factors (ARFs) are transcriptional factors that bind specifically to the DNA sequence 5'-TGTCTC-3' found in the auxin-responsive promoter elements (AuxREs). This chain is Auxin response factor 25 (ARF25), found in Oryza sativa subsp. japonica (Rice).